The sequence spans 182 residues: Small ribosomal subunit protein uS4c (182 aa).

The interval 13–34 is disordered; that stretch reads GLTSKRPRSGSDPKNQLRSGKR. In terms of domain architecture, S4 RNA-binding spans 82-143; sequence MRLDNILFRL…KQRSKALIQN (62 aa).

The protein belongs to the universal ribosomal protein uS4 family. As to quaternary structure, part of the 30S ribosomal subunit. Contacts protein S5. The interaction surface between S4 and S5 is involved in control of translational fidelity.

It localises to the plastid. The protein localises to the chloroplast. Its function is as follows. One of the primary rRNA binding proteins, it binds directly to 16S rRNA where it nucleates assembly of the body of the 30S subunit. With S5 and S12 plays an important role in translational accuracy. This is Small ribosomal subunit protein uS4c (rps4) from Iris lutescens (Crimean iris).